The sequence spans 338 residues: Plasminogen (338 aa).

The Kringle 5 domain occupies 9–88 (CMLGIGKGYQ…LFDYCDVPQC (80 aa)). Intrachain disulfides connect C9-C88, C30-C71, C59-C83, C95-C213, C105-C113, C135-C151, C227-C294, C257-C273, and C284-C312. The Peptidase S1 domain occupies 109–336 (IVGGCVAIAH…FINWIERIMQ (228 aa)). S125 bears the Phosphoserine mark. Residues H150 and D193 each act as charge relay system in the active site. The Charge relay system role is filled by S288.

Belongs to the peptidase S1 family. Plasminogen subfamily. In terms of assembly, interacts with CSPG4 and AMOT. Interacts (via the Kringle domains) with HRG; the interaction tethers PLG to the cell surface and enhances its activation. Interacts (via Kringle 4 domain) with ADA; the interaction stimulates PLG activation when in complex with DPP4. Angiostatin: Interacts with ATP5F1A; the interaction inhibits most of the angiogenic effects of angiostatin.

The protein localises to the secreted. The catalysed reaction is Preferential cleavage: Lys-|-Xaa &gt; Arg-|-Xaa, higher selectivity than trypsin. Converts fibrin into soluble products.. Converted into plasmin by plasminogen activators, both plasminogen and its activator being bound to fibrin. Activated with catalytic amounts of streptokinase. Plasmin dissolves the fibrin of blood clots and acts as a proteolytic factor in a variety of other processes including embryonic development, tissue remodeling, tumor invasion, and inflammation. In ovulation, weakens the walls of the Graafian follicle. It activates the urokinase-type plasminogen activator, collagenases and several complement zymogens, such as C1, C4 and C5. Cleavage of fibronectin and laminin leads to cell detachment and apoptosis. Also cleaves fibrin, thrombospondin and von Willebrand factor. Its role in tissue remodeling and tumor invasion may be modulated by CSPG4. Binds to cells. This chain is Plasminogen (PLG), found in Equus caballus (Horse).